Here is a 512-residue protein sequence, read N- to C-terminus: Acid-sensing ion channel 2 (512 aa).

At 1 to 37 the chain is on the cytoplasmic side; the sequence is MDLKESPSEGSLQPSSIQIFANTSTLHGIRHIFVYGP. Phosphoserine occurs at positions 8 and 11. A helical membrane pass occupies residues 38 to 58; the sequence is LTIRRVLWAVAFVGSLGLLLV. The Extracellular portion of the chain corresponds to 59–427; sequence ESSERVSYYF…EQKKAYEVAA (369 aa). 6 cysteine pairs are disulfide-bonded: cysteine 92-cysteine 193, cysteine 289-cysteine 364, cysteine 307-cysteine 360, cysteine 311-cysteine 358, cysteine 320-cysteine 342, and cysteine 322-cysteine 334. 2 N-linked (GlcNAc...) asparagine glycosylation sites follow: asparagine 365 and asparagine 392. The chain crosses the membrane as a helical span at residues 428–448; it reads LLGDIGGQMGLFIGASILTIL. The short motif at 441 to 443 is the GAS motif; ion selectivity filter element; the sequence is GAS. Residues 449 to 512 lie on the Cytoplasmic side of the membrane; the sequence is ELFDYIYELI…ALGTLEEIAC (64 aa).

Belongs to the amiloride-sensitive sodium channel (TC 1.A.6) family. ASIC2 subfamily. As to quaternary structure, can form homotrimers. Heterotrimer; forms functional heterotrimers producing channel with different properties. Forms heterotrimers with ASIC1; while ASIC1 determines current amplitude, ASIC2 influences the properties of the current. Forms heterotrimers with ASIC3; resulting in channels with distinct properties. Interacts with STOM; STOM regulates the gating of ASIC2-containing channels. Interacts with PICK1; promotes ASIC3 phosphorylation by PKC and activation of ASIC2/ASIC3 heterotrimers. As to expression, expressed by sensory neurons. Expressed by nociceptive sensory neurons, spiral ganglion (SG) neurons and the retina (at protein level). Expressed in outer nuclear layer of retina (photoreceptors) and to a lower extent in distal and proximal inner nuclear layer.

The protein localises to the cell membrane. The enzyme catalyses Na(+)(in) = Na(+)(out). The catalysed reaction is K(+)(in) = K(+)(out). It carries out the reaction Li(+)(in) = Li(+)(out). Inhibited by the diuretic drug amiloride. Its function is as follows. Forms pH-gated trimeric sodium channels that act as postsynaptic excitatory sensors in the nervous system. Upon extracellular acidification, these channels generate rapid, transient inward currents that fully desensitize. Highly selective for sodium, they are permeable to other cations. By forming heterotrimeric channels with ASIC1, could contribute to synaptic plasticity, learning, and memory. Additionally, as acid sensors at nerve terminals, plays a role in mechanosensation and phototransduction. Has no pH-gated sodium channel activity per se but can associate with other ASICs to produce functional channels with specific properties. The polypeptide is Acid-sensing ion channel 2 (Mus musculus (Mouse)).